The sequence spans 143 residues: Peptide methionine sulfoxide reductase B9 (143 aa).

Residues 19–140 (DQDWRAILSP…NSVSLKFSEI (122 aa)) form the MsrB domain. 4 residues coordinate Zn(2+): Cys58, Cys61, Cys104, and Cys107. A disulfide bridge links Cys76 with Cys129. The active-site Nucleophile is the Cys129.

The protein belongs to the MsrB Met sulfoxide reductase family. It depends on Zn(2+) as a cofactor.

It localises to the cytoplasm. It is found in the cytosol. It catalyses the reaction L-methionyl-[protein] + [thioredoxin]-disulfide + H2O = L-methionyl-(R)-S-oxide-[protein] + [thioredoxin]-dithiol. In terms of biological role, catalyzes the reduction of methionine sulfoxide (MetSO) to methionine in proteins. Plays a protective role against oxidative stress by restoring activity to proteins that have been inactivated by methionine oxidation. MSRB family specifically reduces the MetSO R-enantiomer. The polypeptide is Peptide methionine sulfoxide reductase B9 (MSRB9) (Arabidopsis thaliana (Mouse-ear cress)).